The primary structure comprises 314 residues: GTP cyclohydrolase FolE2 (314 aa).

Positions D290–R314 are disordered. Positions A291–Q304 are enriched in low complexity. Over residues Q305–R314 the composition is skewed to polar residues.

The protein belongs to the GTP cyclohydrolase IV family.

The catalysed reaction is GTP + H2O = 7,8-dihydroneopterin 3'-triphosphate + formate + H(+). Its pathway is cofactor biosynthesis; 7,8-dihydroneopterin triphosphate biosynthesis; 7,8-dihydroneopterin triphosphate from GTP: step 1/1. In terms of biological role, converts GTP to 7,8-dihydroneopterin triphosphate. In Pseudomonas putida (strain ATCC 47054 / DSM 6125 / CFBP 8728 / NCIMB 11950 / KT2440), this protein is GTP cyclohydrolase FolE2.